We begin with the raw amino-acid sequence, 250 residues long: 5-oxoprolinase subunit A (250 aa).

It belongs to the LamB/PxpA family. In terms of assembly, forms a complex composed of PxpA, PxpB and PxpC.

It carries out the reaction 5-oxo-L-proline + ATP + 2 H2O = L-glutamate + ADP + phosphate + H(+). In terms of biological role, catalyzes the cleavage of 5-oxoproline to form L-glutamate coupled to the hydrolysis of ATP to ADP and inorganic phosphate. In Staphylococcus aureus (strain bovine RF122 / ET3-1), this protein is 5-oxoprolinase subunit A.